Reading from the N-terminus, the 704-residue chain is E3 ubiquitin-protein ligase MBR1 (704 aa).

Disordered regions lie at residues 1–20 (MNPM…VNQV), 37–61 (NPAD…SSSH), 176–197 (SSLG…SPFG), 245–354 (LSLA…GENQ), 381–403 (SNPS…PRSN), and 436–525 (SLFV…RHRR). Residues 43 to 61 (FPNNSTPSGRPTYASSSSH) are compositionally biased toward polar residues. 2 stretches are compositionally biased toward low complexity: residues 184 to 196 (AAGE…ASPF) and 245 to 255 (LSLATPSQSSP). 3 stretches are compositionally biased toward polar residues: residues 281–290 (FHSTRNTDTL), 300–329 (RQPQ…NLPL), and 340–354 (RSSS…GENQ). Residues 452–467 (QPNPTWIPPQNAPPHN) are compositionally biased toward pro residues. Low complexity predominate over residues 485–505 (SPSASHGGPLPLLPAGPSVSS). An RING-type; atypical zinc finger spans residues 656–697 (CCICQEEYVEGDNLGTLKCGHEFHKDCIKQWVMIKNLCPICK).

It belongs to the RING-type zinc finger family. Interacts with MED25 and UBC11.

The enzyme catalyses S-ubiquitinyl-[E2 ubiquitin-conjugating enzyme]-L-cysteine + [acceptor protein]-L-lysine = [E2 ubiquitin-conjugating enzyme]-L-cysteine + N(6)-ubiquitinyl-[acceptor protein]-L-lysine.. It participates in protein modification; protein ubiquitination. Functionally, E3 ubiquitin-protein ligase that functions as a regulator of MED25 stability by targeting MED25 for degradation in a RING-H2-dependent way. Proteasome-dependent degradation of MED25 seems to activate its function as positive regulator of FLOWERING LOCUS T (FT) and is important to induce the expression of FT and consequently to promote flowering. This Arabidopsis thaliana (Mouse-ear cress) protein is E3 ubiquitin-protein ligase MBR1 (MBR1).